The sequence spans 388 residues: Succinate--CoA ligase [ADP-forming] subunit beta (388 aa).

The ATP-grasp domain maps to 9–244 (KALFAEYGLP…PSQDDAREAH (236 aa)). ATP contacts are provided by residues Lys46, 53–55 (GRG), Glu99, Thr102, and Glu107. Residues Asn199 and Asp213 each contribute to the Mg(2+) site. Residues Asn264 and 321-323 (GIV) each bind substrate.

It belongs to the succinate/malate CoA ligase beta subunit family. In terms of assembly, heterotetramer of two alpha and two beta subunits. Mg(2+) is required as a cofactor.

It catalyses the reaction succinate + ATP + CoA = succinyl-CoA + ADP + phosphate. The enzyme catalyses GTP + succinate + CoA = succinyl-CoA + GDP + phosphate. Its pathway is carbohydrate metabolism; tricarboxylic acid cycle; succinate from succinyl-CoA (ligase route): step 1/1. Succinyl-CoA synthetase functions in the citric acid cycle (TCA), coupling the hydrolysis of succinyl-CoA to the synthesis of either ATP or GTP and thus represents the only step of substrate-level phosphorylation in the TCA. The beta subunit provides nucleotide specificity of the enzyme and binds the substrate succinate, while the binding sites for coenzyme A and phosphate are found in the alpha subunit. The protein is Succinate--CoA ligase [ADP-forming] subunit beta of Shewanella pealeana (strain ATCC 700345 / ANG-SQ1).